Here is a 173-residue protein sequence, read N- to C-terminus: MAKVQGKGAAEKENDDGLREKMIAVNRVSKVVKGGRTMSFAALTVVGDGDGRIGMGKGKAREVPVSVQKAMEQARRGMFKVALKNGTLHHTVVGKHGASTVLISPAAEGTGVIAGGPMRAIFEVMGVRNVVAKSLGSSNPYNMVRATLNGLRASLTPSEVAAKRGKTVEEILG.

An S5 DRBM domain is found at 18 to 81 (LREKMIAVNR…EQARRGMFKV (64 aa)).

Belongs to the universal ribosomal protein uS5 family. As to quaternary structure, part of the 30S ribosomal subunit. Contacts proteins S4 and S8.

In terms of biological role, with S4 and S12 plays an important role in translational accuracy. Its function is as follows. Located at the back of the 30S subunit body where it stabilizes the conformation of the head with respect to the body. In Bordetella petrii (strain ATCC BAA-461 / DSM 12804 / CCUG 43448), this protein is Small ribosomal subunit protein uS5.